The following is a 216-amino-acid chain: ATP-dependent Clp protease proteolytic subunit (216 aa).

The active-site Nucleophile is Ser-101. The active site involves His-126.

The protein belongs to the peptidase S14 family. In terms of assembly, component of the chloroplastic Clp protease core complex.

The protein resides in the plastid. Its subcellular location is the chloroplast stroma. The enzyme catalyses Hydrolysis of proteins to small peptides in the presence of ATP and magnesium. alpha-casein is the usual test substrate. In the absence of ATP, only oligopeptides shorter than five residues are hydrolyzed (such as succinyl-Leu-Tyr-|-NHMec, and Leu-Tyr-Leu-|-Tyr-Trp, in which cleavage of the -Tyr-|-Leu- and -Tyr-|-Trp bonds also occurs).. In terms of biological role, cleaves peptides in various proteins in a process that requires ATP hydrolysis. Has a chymotrypsin-like activity. Plays a major role in the degradation of misfolded proteins. The polypeptide is ATP-dependent Clp protease proteolytic subunit (Hordeum vulgare (Barley)).